We begin with the raw amino-acid sequence, 274 residues long: CDC48-associated ubiquitin-like/zinc finger protein 1 (274 aa).

An AN1-type zinc finger spans residues 12 to 58; sequence LDVGKHCAYCRQLDFLPFHCSFCNEDFCSNHRLKEDHHCRWLLEHEE. The Zn(2+) site is built by Cys-18, Cys-21, Cys-31, Cys-34, Cys-39, His-42, His-48, and Cys-50. Residues 170–266 are ubiquitin-like; sequence NRIYIWCYLV…KDLDTLYLVH (97 aa). Ser-273 is modified (phosphoserine).

In terms of assembly, interacts (via its ubiquitin-like domain) with CDC48 (via N-terminus). Associates with the 26S proteasome. Specifically interacts with the regulatory particle (RP) subunit RPN2. Exposure to arsenite, a known inducer of protein misfolding resulting in accumulation of polyubiquitinated conjugates, enhances the association with the proteoasome. Binds to ubiquitinated proteins conjugated to a 4 or more molecule ubiquitin chain. Binding to ubiquitinated proteins is zinc-dependent.

Its subcellular location is the cytoplasm. It is found in the nucleus. In terms of biological role, promotes efficient arsenite-induced clearance of stress granules (SGs). May have a role in the ubiquitin-proteasome system (UPS) protecting cells from metalloid-induced proteotoxicity. The polypeptide is CDC48-associated ubiquitin-like/zinc finger protein 1 (Saccharomyces cerevisiae (strain ATCC 204508 / S288c) (Baker's yeast)).